The primary structure comprises 304 residues: Calcium release-activated calcium channel protein 1 (304 aa).

A compositionally biased stretch (pro residues) spans 1–11 (MHPEPAPPPSH). The interval 1-50 (MHPEPAPPPSHSNPELPVSGGSSTSGSRRSRRRSGDGEPSGAPPLPPPPP) is disordered. The Cytoplasmic segment spans residues 1–89 (MHPEPAPPPS…KLYLSRAKLK (89 aa)). Residues 3–49 (PEPAPPPSHSNPELPVSGGSSTSGSRRSRRRSGDGEPSGAPPLPPPP) form a required for generation of inwardly rectifying CRAC currents region. Low complexity predominate over residues 12 to 27 (SNPELPVSGGSSTSGS). The interval 39 to 61 (PSGAPPLPPPPPAVSYPDWIGQS) is AKAP5 association region. A compositionally biased stretch (pro residues) spans 41–50 (GAPPLPPPPP). The tract at residues 72 to 92 (SMQALSWRKLYLSRAKLKASS) is interaction with STIM1. The helical transmembrane segment at 90–107 (ASSRTSALLSGFAMVAMV) threads the bilayer. At 108–121 (EVQLDTDHDYPPGL) the chain is on the extracellular side. A helical membrane pass occupies residues 122–142 (LIVFSACTTVLVAVHLFALMI). The Cytoplasmic segment spans residues 143 to 175 (STCILPNIEAVSNVHNLNSVKESPHERMHRHIE). A helical transmembrane segment spans residues 176–196 (LAWAFSTVIGTLLFLAEVVLL). The Extracellular portion of the chain corresponds to 197 to 237 (CWVKFLPLKRQAGQPSPTKPPAESVIVANHSDSSGITPGEA). N-linked (GlcNAc...) asparagine glycosylation occurs at N225. The chain crosses the membrane as a helical span at residues 238–258 (AAIASTAIMVPCGLVFIVFAV). Topologically, residues 259-304 (HFYRSLVSHKTDRQFQELNELAEFARLQDQLDHRGDHSLTPGTHYA) are cytoplasmic. An interaction with STIM1 region spans residues 275-295 (ELNELAEFARLQDQLDHRGDH). At T298 the chain carries Phosphothreonine.

Belongs to the Orai family. As to quaternary structure, oligomerizes in homomeric and heteromeric ORAI complexes. Native CRAC channels most likely consist of hexameric ORAI heteromers, implying that diverse ORAI1, ORAI2 and ORAI3 subunit combinations with distinct biophysical properties can operate in a cell-type specific way. ARC channels are heteropentamers consisting of three ORAI1 and two ORAI3 subunits. Interacts with STIM1 and STIM2; this regulates channel activity. Interacts with CALM; this may displace STIM1 and STIM2 and might thereby modulate channel activity. Interacts (via N-terminus) with AKAP5 upon store depletion. Interacts with CRACR2A/EFCAB4B; the interaction is direct and takes place in absence of Ca(2+). Forms a complex with CRACR2A/EFCAB4B and STIM1 at low concentration of Ca(2+), the complex dissociates at elevated Ca(2+) concentrations. Interacts with ASPH (isoform 8). Interacts with SLC35G1. Interacts with UBQLN1. Interacts with ADCY8; interaction is calcium store depletion independent; interaction occurs in membrane raft; interaction increases markedly after store depletion; positively regulates SOCE-induced adenylate cyclase activity; contributes to the targeting of ADCY8 to discrete regions of the plasma membrane that are shielded from other calcium events. Interacts with EFHB; the interaction takes place upon Ca(2+)-store depletion. Interacts (via N- and C-termini) with ATP2C2 (via N-terminus); this interaction regulates Ca(2+) influx at the plasma membrane. Interacts with TSPAN18; this interaction regulates ORAI1 exit from the endoplasmic (ER), and/or Golgi, and trafficking to the cell surface. In terms of processing, N-glycosylated. N-glycosylation inhibits channel activity in T cells. Post-translationally, ubiquitinated. Cys-195 is oxidated, leading to inactivation of channel activity. As to expression, expressed in lactating mammary epithelium (at protein level).

It localises to the cell membrane. It is found in the basolateral cell membrane. The enzyme catalyses Ca(2+)(in) = Ca(2+)(out). Its activity is regulated as follows. Oxidation at Cys-197 leads to inactivation of channel activity. In terms of biological role, pore-forming subunit of two major inward rectifying Ca(2+) channels at the plasma membrane: Ca(2+) release-activated Ca(2+) (CRAC) channels and arachidonate-regulated Ca(2+)-selective (ARC) channels. Assembles with ORAI2 and ORAI3 to form hexameric CRAC channels that mediate Ca(2+) influx upon depletion of endoplasmic reticulum Ca(2+) store and channel activation by Ca(2+) sensor STIM1, a process known as store-operated Ca(2+) entry (SOCE). Various pore subunit combinations may account for distinct CRAC channel spatiotemporal and cell-type specific dynamics. ORAI1 mainly contributes to the generation of Ca(2+) plateaus involved in sustained Ca(2+) entry and is dispensable for cytosolic Ca(2+) oscillations, whereas ORAI2 and ORAI3 generate oscillatory patterns. CRAC channels assemble in Ca(2+) signaling microdomains where Ca(2+) influx is coupled to calmodulin and calcineurin signaling and activation of NFAT transcription factors recruited to ORAI1 via AKAP5. Activates NFATC2/NFAT1 and NFATC3/NFAT4-mediated transcriptional responses. CRAC channels are the main pathway for Ca(2+) influx in T cells and promote the immune response to pathogens by activating NFAT-dependent cytokine and chemokine transcription. Assembles with ORAI3 to form channels that mediate store-independent Ca(2+) influx in response to inflammatory metabolites arachidonate or its derivative leukotriene C4, termed ARC and LRC channels respectively. Plays a prominent role in Ca(2+) influx at the basolateral membrane of mammary epithelial cells independently of the Ca(2+) content of endoplasmic reticulum or Golgi stores. May mediate transepithelial transport of large quantities of Ca(2+) for milk secretion. In Mus musculus (Mouse), this protein is Calcium release-activated calcium channel protein 1 (Orai1).